The sequence spans 99 residues: Acylphosphatase (99 aa).

Positions 10-99 (RLTAFVHGHV…PRGVEGFTER (90 aa)) constitute an Acylphosphatase-like domain. Active-site residues include Arg25 and Asn43.

It belongs to the acylphosphatase family.

The catalysed reaction is an acyl phosphate + H2O = a carboxylate + phosphate + H(+). The protein is Acylphosphatase (acyP) of Corynebacterium efficiens (strain DSM 44549 / YS-314 / AJ 12310 / JCM 11189 / NBRC 100395).